Reading from the N-terminus, the 313-residue chain is Non-functional target of rapamycin complex subunit LST8-2 (313 aa).

WD repeat units follow at residues 1–35 (MFEN…CYFS), 38–76 (YPDL…PHIP), 82–121 (SHTK…CQRE), 123–162 (RSVS…CSCE), 166–205 (EVGT…QTMT), 215–255 (AHNS…LEKV), and 258–297 (GHER…EEMV).

The protein belongs to the WD repeat LST8 family.

In terms of biological role, probable non-functional protein. In Arabidopsis thaliana (Mouse-ear cress), this protein is Non-functional target of rapamycin complex subunit LST8-2.